The sequence spans 1065 residues: DNA ligase 4 (1065 aa).

The disordered stretch occupies residues 1–20 (MAVHAPYNHAPPPTQEINGQ). ATP contacts are provided by Glu295, Lys297, Leu298, Arg302, Glu357, Phe387, Glu452, Lys457, Lys474, and Lys476. Lys297 (N6-AMP-lysine intermediate) is an active-site residue. A Mg(2+)-binding site is contributed by Glu357. Glu452 lines the Mg(2+) pocket. Positions 696–775 (VETSIFSDMT…TALPFLKEFL (80 aa)) constitute a BRCT 1 domain. A disordered region spans residues 825-928 (GEDKDEIDVE…SDVGVNGDDY (104 aa)). Composition is skewed to basic and acidic residues over residues 834–864 (EESR…KKLQ) and 886–900 (MSLK…ERSR). A BRCT 2 domain is found at 954–1064 (DEDRIFYHLA…TLLDEDLYKP (111 aa)).

Belongs to the ATP-dependent DNA ligase family. Mg(2+) serves as cofactor.

Its subcellular location is the nucleus. It carries out the reaction ATP + (deoxyribonucleotide)n-3'-hydroxyl + 5'-phospho-(deoxyribonucleotide)m = (deoxyribonucleotide)n+m + AMP + diphosphate.. Functionally, DNA ligase involved in DNA non-homologous end joining (NHEJ); required for double-strand break (DSB) repair. In Cryptococcus neoformans var. neoformans serotype D (strain B-3501A) (Filobasidiella neoformans), this protein is DNA ligase 4 (LIG4).